Reading from the N-terminus, the 348-residue chain is MAVRIDGSYGEGGGQILRTSIALSALLGRPVEIVNIRAKRANPGLQPQHLTGVKVAALLTDAEVKGAEKGSTRLYFEPKTLKCGNFSIDIGTAGSISLIVQTLAPILLYAPCPTQITVTGGTDVAWAPPIDYMRFVFTKVLERFGAKLSIELIRRGHYPRGGGRAVVRAEPVKRLKAVESEEFGNVVKISGISHAVNLPPHVAERQAKAAREELSKMGLDADIAIEVRNDGLGPGSGVVIWAVSDAGNVIGGDSLGERGKPAETVGKEAAQKLIAVLKTRASVDPHMADMAVLYMALAEGRSRISTSEETMHLKTNMYIIEQFLRVKFSTMEKAGRYTIEVEGVGYNR.

Residues glutamine 101 and 286–289 (HMAD) each bind ATP. Histidine 312 (tele-AMP-histidine intermediate) is an active-site residue.

This sequence belongs to the RNA 3'-terminal cyclase family. Type 1 subfamily.

The protein resides in the cytoplasm. The catalysed reaction is a 3'-end 3'-phospho-ribonucleotide-RNA + ATP = a 3'-end 2',3'-cyclophospho-ribonucleotide-RNA + AMP + diphosphate. Its function is as follows. Catalyzes the conversion of 3'-phosphate to a 2',3'-cyclic phosphodiester at the end of RNA. The mechanism of action of the enzyme occurs in 3 steps: (A) adenylation of the enzyme by ATP; (B) transfer of adenylate to an RNA-N3'P to produce RNA-N3'PP5'A; (C) and attack of the adjacent 2'-hydroxyl on the 3'-phosphorus in the diester linkage to produce the cyclic end product. The biological role of this enzyme is unknown but it is likely to function in some aspects of cellular RNA processing. In Pyrobaculum aerophilum (strain ATCC 51768 / DSM 7523 / JCM 9630 / CIP 104966 / NBRC 100827 / IM2), this protein is RNA 3'-terminal phosphate cyclase.